The sequence spans 1104 residues: Extended synaptotagmin-1 (1104 aa).

The residue at position 1 (M1) is an N-acetylmethionine. Over 1 to 38 (MERSPGEGPSPSPMDQPSAPSDPTDQPPAAHAKPDPGS) the chain is Cytoplasmic. The interval 1–48 (MERSPGEGPSPSPMDQPSAPSDPTDQPPAAHAKPDPGSGGQPAGPGAA) is disordered. A compositionally biased stretch (gly residues) spans 37 to 47 (GSGGQPAGPGA). A helical membrane pass occupies residues 39 to 59 (GGQPAGPGAAGEALAVLTSFG). The Lumenal portion of the chain corresponds to 60–62 (RRL). The chain crosses the membrane as a helical span at residues 63–83 (LVLIPVYLAGAVGLSVGFVLF). Residues 84–1104 (GLALYLGWRR…LMDNKDKGSS (1021 aa)) are Cytoplasmic-facing. The stretch at 91–116 (WRRVRDEKERSLRAARQLLDDEEQLT) forms a coiled coil. One can recognise an SMP-LTD domain in the interval 135–313 (DVEKAEWLNK…LPNRLLVPLV (179 aa)). C2 domains lie at 312–433 (LVPD…DDWF), 460–580 (QVLQ…QLSS), 627–751 (SVDA…DEWL), and 777–899 (LEEV…TLSS). Residue S324 is modified to Phosphoserine; by CDK5. Ca(2+)-binding residues include K344, D345, D357, D404, D406, D408, D410, and D411. Positions 617–641 (VDSENPQRGSSVDAPPRPCHTTPDS) are disordered. Residue K817 is modified to N6-acetyllysine. Phosphoserine occurs at positions 820 and 941. The segment at 924–950 (SHSYSHSSSSLSEEPELSGGPPHITSS) is disordered. A compositionally biased stretch (low complexity) spans 925 to 946 (HSYSHSSSSLSEEPELSGGPPH). T948 is subject to Phosphothreonine. Residues S949 and S963 each carry the phosphoserine modification. The region spanning 971 to 1093 (PLGQVKLTLW…DLSQGVARWY (123 aa)) is the C2 5 domain. Y1009 carries the phosphotyrosine modification. The required for phosphatidylinositol 4,5-bisphosphate-dependent location at the cell membrane stretch occupies residues 1018–1025 (KNRGTKRR). A Phosphoserine modification is found at S1034.

Belongs to the extended synaptotagmin family. As to quaternary structure, interacts with ESYT2 and ESYT3. Interacts with ADGRD1; inhibiting the G-protein-coupled receptor activity of ADGRD1. Interaction with ADGRD1 is abolished when cytosolic calcium increases, relieving ADGRD1 G-protein-coupled receptor activity. Interacts (phosphorylated form) with SLC2A4. In terms of processing, phosphorylated on Ser residues in insulin-treated adipocytes (in vitro); this promotes interaction with SLC2A4. In terms of tissue distribution, widely expressed.

It is found in the endoplasmic reticulum membrane. It localises to the cell membrane. Functionally, binds calcium (via the C2 domains) and translocates to sites of contact between the endoplasmic reticulum and the cell membrane in response to increased cytosolic calcium levels. Helps tether the endoplasmic reticulum to the cell membrane and promotes the formation of appositions between the endoplasmic reticulum and the cell membrane. Acts as an inhibitor of ADGRD1 G-protein-coupled receptor activity in absence of cytosolic calcium. Binds glycerophospholipids in a barrel-like domain and may play a role in cellular lipid transport. This Homo sapiens (Human) protein is Extended synaptotagmin-1.